We begin with the raw amino-acid sequence, 530 residues long: UPF0422 protein lpl2888 (530 aa).

Positions 1 to 19 (MKFKKIILALACLSSPLYA) are cleaved as a signal peptide. A coiled-coil region spans residues 20 to 66 (DQDQQLKSEIQRLQHQAEDLQAQLNRLQKQLANHKSSQQKHEQQAAT). The segment at 50–81 (LANHKSSQQKHEQQAATKPAEPQSKPTVKSGA) is disordered.

It belongs to the UPF0422 family.

In Legionella pneumophila (strain Lens), this protein is UPF0422 protein lpl2888.